A 343-amino-acid chain; its full sequence is Tumor necrosis factor receptor superfamily member wgn (343 aa).

2 disordered regions span residues 1–44 and 74–96; these read MMPP…IGGS and SSAA…SIAS. An N-terminal signal peptide occupies residues 1–76; the sequence is MMPPRLPGGH…ATSASSSSSA (76 aa). The span at 13-24 shows a compositional bias: low complexity; the sequence is AMRSRSSSSGHH. Basic residues predominate over residues 29–39; sequence FHKRRRRRQQH. Residues 77-201 are Extracellular-facing; that stretch reads ANTDIAPPDP…AAWVLDWQTG (125 aa). A TNFR-Cys repeat occupies 99–137; it reads PCAPQHWWDSQRDRCTPCTRCQGEMIPLRPCQLHTDTIC. 3 disulfide bridges follow: Cys100–Cys113, Cys116–Cys129, and Cys119–Cys137. A helical transmembrane segment spans residues 202 to 222; it reads VLYVAVLTCLVFFSVAACILI. The Cytoplasmic segment spans residues 223–343; that stretch reads HHMRQWRRME…GVRGCSGLKG (121 aa). Positions 225–257 form a coiled coil; that stretch reads MRQWRRMERRLDQDVEELSTKLMAKLAEVQSLD.

In terms of assembly, monomer. Interacts (via extracellular cystein-rich domain) with egr (via secreted TNF-homology soluble form); forms heterohexamers when 3 copies associate with egr trimers. Interacts with Traf6. Interacts with Moe. In terms of tissue distribution, expressed in the adult midgut; under normal conditions expressed at higher levels than the other TNF receptor grnd.

It is found in the cell membrane. It localises to the cytoplasmic vesicle membrane. Its function is as follows. Receptor for egr. Involved in induction of apoptosis by triggering JNK signaling. Mediates the tumor suppressor activity of egr which eliminates oncogenic cells from epithelia, thereby maintaining epithelial integrity. Following UV-induced epidermal damage, binds to egr released from apoptotic epidermal cells and plays a role in development of thermal allodynia, a responsiveness to subthreshold thermal stimuli which are not normally perceived as noxious. Together with Moe, involved in control of axon targeting of R8 and R2-R5 photoreceptors, independent of egr. The protein is Tumor necrosis factor receptor superfamily member wgn of Drosophila melanogaster (Fruit fly).